The chain runs to 890 residues: Nitrate reductase [NADH] 2 (890 aa).

Residue Cys165 coordinates Mo-molybdopterin. The Cytochrome b5 heme-binding domain occupies 513–588 (SKMFSVSEVK…LEDYRIGELI (76 aa)). Heme-binding residues include His548 and His571. An FAD-binding FR-type domain is found at 634–746 (RQKIPCKLVS…KGPLGHIEYT (113 aa)). FAD contacts are provided by residues 686 to 689 (RAYT), 703 to 707 (LIKVY), Phe708, Phe715, 720 to 722 (LMS), and Thr773.

The protein belongs to the nitrate reductase family. In terms of assembly, homodimer. Requires FAD as cofactor. Heme is required as a cofactor. It depends on Mo-molybdopterin as a cofactor.

It catalyses the reaction nitrite + NAD(+) + H2O = nitrate + NADH + H(+). Its function is as follows. Nitrate reductase is a key enzyme involved in the first step of nitrate assimilation in plants, fungi and bacteria. This is Nitrate reductase [NADH] 2 (NIA2) from Phaseolus vulgaris (Kidney bean).